The sequence spans 196 residues: SAGA-associated factor 11 homolog (196 aa).

The interval 1–22 (MSAANMPTTTGAQGSGNQVPTT) is disordered. The SGF11-type zinc finger occupies 106 to 127 (CTCPNCDRLVAAARFAPHLEKC). The tract at residues 141-196 (RLATKEGATSAHLHSSGNTGGTDDEDDVDWSSDKRRKKSNQNSRNNGSKKNNGKTF) is disordered. Position 172 is a phosphoserine (Ser172). Positions 180 to 196 (NQNSRNNGSKKNNGKTF) are enriched in low complexity.

The protein belongs to the SGF11 family. In terms of assembly, component of some SAGA transcription coactivator-HAT complexes, at least composed of Ada2b, not/nonstop, Pcaf/Gcn5, Sgf11 and Spt3. Within the SAGA complex, Sgf11, e(y)2, and not/nonstop form an additional subcomplex of SAGA called the DUB module (deubiquitination module). Interacts directly with not/nonstop. Interacts with the AMEX complex component xmas-2. Interacts with Cbp80; important for promoter recruitment of Sgf11 that is not associated with the DUB module.

It localises to the nucleus. The protein resides in the nucleoplasm. Its subcellular location is the cytoplasm. Functionally, component of the transcription regulatory histone acetylation (HAT) complex SAGA, a multiprotein complex that activates transcription by remodeling chromatin and mediating histone acetylation and deubiquitination. Within the SAGA complex, participates in a subcomplex that specifically deubiquitinates histone H2B. The SAGA complex is recruited to specific gene promoters by activators, where it is required for transcription. Required for nuclear receptor-mediated transactivation. Binds independently on SAGA to promoters in an RNA-dependent manner. Binds to mRNA and is essential for total mRNA export from the nucleus. Required to counteract heterochromatin silencing. Controls the development of neuronal connectivity in visual system by being required for accurate axon targeting in the optic lobe. Required for expression of ecdysone-induced genes such as br/broad. This is SAGA-associated factor 11 homolog from Drosophila simulans (Fruit fly).